The primary structure comprises 176 residues: NAD(P)H-quinone oxidoreductase subunit 6, chloroplastic (176 aa).

The next 5 helical transmembrane spans lie at 10–30 (FLLV…VLLT), 32–52 (PIFS…FYIL), 61–81 (AQLL…VMFM), 95–115 (VGNG…ITII), and 152–172 (FFLP…GAIA).

Belongs to the complex I subunit 6 family. NDH is composed of at least 16 different subunits, 5 of which are encoded in the nucleus.

The protein resides in the plastid. It is found in the chloroplast thylakoid membrane. The enzyme catalyses a plastoquinone + NADH + (n+1) H(+)(in) = a plastoquinol + NAD(+) + n H(+)(out). The catalysed reaction is a plastoquinone + NADPH + (n+1) H(+)(in) = a plastoquinol + NADP(+) + n H(+)(out). NDH shuttles electrons from NAD(P)H:plastoquinone, via FMN and iron-sulfur (Fe-S) centers, to quinones in the photosynthetic chain and possibly in a chloroplast respiratory chain. The immediate electron acceptor for the enzyme in this species is believed to be plastoquinone. Couples the redox reaction to proton translocation, and thus conserves the redox energy in a proton gradient. This Populus alba (White poplar) protein is NAD(P)H-quinone oxidoreductase subunit 6, chloroplastic (ndhG).